A 173-amino-acid polypeptide reads, in one-letter code: U4/U6.U5 small nuclear ribonucleoprotein component snu23 (173 aa).

Residues 55–85 (WYCEACNETYKDSLSWLDHLNSTQHLRKTRT) form a Matrin-type zinc finger. Positions 119–149 (SLKERVERYHQELEAKKLRRKQKKVNKEKNS) form a coiled coil.

In terms of assembly, component of the 25S U4/U6.U5 tri-snRNP particle, a subcomplex of the spliceosome.

It localises to the cytoplasm. The protein localises to the cytoskeleton. It is found in the microtubule organizing center. Its subcellular location is the spindle pole body. The protein resides in the nucleus. This Schizosaccharomyces pombe (strain 972 / ATCC 24843) (Fission yeast) protein is U4/U6.U5 small nuclear ribonucleoprotein component snu23 (snu23).